Here is a 260-residue protein sequence, read N- to C-terminus: uncharacterized protein (260 aa).

A run of 6 helical transmembrane segments spans residues 39–59, 68–88, 111–131, 159–179, 193–213, and 214–234; these read IFYL…LIEA, IIVG…SFLI, FLGS…FFLG, LIFS…LFKI, FIYL…ILSQ, and FILV…IKLI.

It belongs to the TatC family.

Its subcellular location is the mitochondrion membrane. This is an uncharacterized protein from Reclinomonas americana.